We begin with the raw amino-acid sequence, 493 residues long: Exosome complex component Rrp41 (493 aa).

2 disordered regions span residues 244-264 and 291-493; these read VSEE…PSPV and LASE…EKDE. Basic and acidic residues predominate over residues 249–259; it reads APEKGAEKEVL. The span at 297–377 shows a compositional bias: acidic residues; the sequence is PDFEDELEEE…ALEEETELEA (81 aa). Residues 383–400 are compositionally biased toward basic and acidic residues; sequence PELKEFDEIEARLEKEDA. The span at 401-471 shows a compositional bias: acidic residues; the sequence is SIEAEEEIEP…EAEEEPEEEK (71 aa). The segment covering 472-493 has biased composition (basic and acidic residues); the sequence is SEGPWKVVKDPSEAGTRGEKDE.

Belongs to the RNase PH family. Rrp41 subfamily. As to quaternary structure, component of the archaeal exosome complex. Forms a hexameric ring-like arrangement composed of 3 Rrp41-Rrp42 heterodimers. The hexameric ring associates with a trimer of Rrp4 and/or Csl4 subunits.

It localises to the cytoplasm. In terms of biological role, catalytic component of the exosome, which is a complex involved in RNA degradation. Has 3'-&gt;5' exoribonuclease activity. Can also synthesize heteromeric RNA-tails. This Methanosarcina mazei (strain ATCC BAA-159 / DSM 3647 / Goe1 / Go1 / JCM 11833 / OCM 88) (Methanosarcina frisia) protein is Exosome complex component Rrp41.